An 89-amino-acid chain; its full sequence is Small ribosomal subunit protein uS14 (89 aa).

It belongs to the universal ribosomal protein uS14 family. As to quaternary structure, part of the 30S ribosomal subunit. Contacts proteins S3 and S10.

Binds 16S rRNA, required for the assembly of 30S particles and may also be responsible for determining the conformation of the 16S rRNA at the A site. The sequence is that of Small ribosomal subunit protein uS14 from Chlorobaculum tepidum (strain ATCC 49652 / DSM 12025 / NBRC 103806 / TLS) (Chlorobium tepidum).